Reading from the N-terminus, the 413-residue chain is 3-isopropylmalate dehydratase large subunit (413 aa).

Cysteine 295, cysteine 353, and cysteine 356 together coordinate [4Fe-4S] cluster.

Belongs to the aconitase/IPM isomerase family. LeuC type 2 subfamily. In terms of assembly, heterodimer of LeuC and LeuD. The cofactor is [4Fe-4S] cluster.

The enzyme catalyses (2R,3S)-3-isopropylmalate = (2S)-2-isopropylmalate. It functions in the pathway amino-acid biosynthesis; L-leucine biosynthesis; L-leucine from 3-methyl-2-oxobutanoate: step 2/4. Its function is as follows. Catalyzes the isomerization between 2-isopropylmalate and 3-isopropylmalate, via the formation of 2-isopropylmaleate. The polypeptide is 3-isopropylmalate dehydratase large subunit (Pyrobaculum calidifontis (strain DSM 21063 / JCM 11548 / VA1)).